A 234-amino-acid chain; its full sequence is Adenosine 5'-phosphosulfate reductase (234 aa).

[4Fe-4S] cluster contacts are provided by Cys-120, Cys-121, Cys-203, and Cys-206. The active-site Nucleophile; cysteine thiosulfonate intermediate is the Cys-229.

It belongs to the PAPS reductase family. CysH subfamily. [4Fe-4S] cluster is required as a cofactor.

The protein localises to the cytoplasm. The catalysed reaction is [thioredoxin]-disulfide + sulfite + AMP + 2 H(+) = adenosine 5'-phosphosulfate + [thioredoxin]-dithiol. Its pathway is sulfur metabolism; hydrogen sulfide biosynthesis; sulfite from sulfate. Its function is as follows. Catalyzes the formation of sulfite from adenosine 5'-phosphosulfate (APS) using thioredoxin as an electron donor. The polypeptide is Adenosine 5'-phosphosulfate reductase (Bacillus cereus (strain B4264)).